The primary structure comprises 479 residues: Bifunctional protein HldE (479 aa).

The ribokinase stretch occupies residues 1 to 322 (MIDDFRFGRI…RELLQEMPET (322 aa)). 198-201 (NRIE) contributes to the ATP binding site. Aspartate 267 is an active-site residue. Positions 347–479 (FTNGCFDLVH…LVRGMQSAPS (133 aa)) are cytidylyltransferase.

This sequence in the N-terminal section; belongs to the carbohydrate kinase PfkB family. It in the C-terminal section; belongs to the cytidylyltransferase family. As to quaternary structure, homodimer.

It carries out the reaction D-glycero-beta-D-manno-heptose 7-phosphate + ATP = D-glycero-beta-D-manno-heptose 1,7-bisphosphate + ADP + H(+). The catalysed reaction is D-glycero-beta-D-manno-heptose 1-phosphate + ATP + H(+) = ADP-D-glycero-beta-D-manno-heptose + diphosphate. It participates in nucleotide-sugar biosynthesis; ADP-L-glycero-beta-D-manno-heptose biosynthesis; ADP-L-glycero-beta-D-manno-heptose from D-glycero-beta-D-manno-heptose 7-phosphate: step 1/4. Its pathway is nucleotide-sugar biosynthesis; ADP-L-glycero-beta-D-manno-heptose biosynthesis; ADP-L-glycero-beta-D-manno-heptose from D-glycero-beta-D-manno-heptose 7-phosphate: step 3/4. Its function is as follows. Catalyzes the phosphorylation of D-glycero-D-manno-heptose 7-phosphate at the C-1 position to selectively form D-glycero-beta-D-manno-heptose-1,7-bisphosphate. In terms of biological role, catalyzes the ADP transfer from ATP to D-glycero-beta-D-manno-heptose 1-phosphate, yielding ADP-D-glycero-beta-D-manno-heptose. This Gluconobacter oxydans (strain 621H) (Gluconobacter suboxydans) protein is Bifunctional protein HldE.